The chain runs to 343 residues: Holliday junction branch migration complex subunit RuvB (343 aa).

A disordered region spans residues 1–20; the sequence is MEEMASRMISGDPELGEPFQ. The tract at residues 1–185 is large ATPase domain (RuvB-L); that stretch reads MEEMASRMIS…FGILARMQFY (185 aa). Residues Leu-24, Arg-25, Gly-66, Lys-69, Thr-70, Thr-71, 132-134, Arg-175, Tyr-185, and Arg-222 each bind ATP; that span reads EDF. Thr-70 is a Mg(2+) binding site. The tract at residues 186 to 256 is small ATPAse domain (RuvB-S); sequence EPDELQQIVT…LADRALLALE (71 aa). The head domain (RuvB-H) stretch occupies residues 259–343; the sequence is RNGLDNMDHR…PRPVQQGTLL (85 aa). Residues Arg-295, Arg-314, and Arg-319 each coordinate DNA.

This sequence belongs to the RuvB family. In terms of assembly, homohexamer. Forms an RuvA(8)-RuvB(12)-Holliday junction (HJ) complex. HJ DNA is sandwiched between 2 RuvA tetramers; dsDNA enters through RuvA and exits via RuvB. An RuvB hexamer assembles on each DNA strand where it exits the tetramer. Each RuvB hexamer is contacted by two RuvA subunits (via domain III) on 2 adjacent RuvB subunits; this complex drives branch migration. In the full resolvosome a probable DNA-RuvA(4)-RuvB(12)-RuvC(2) complex forms which resolves the HJ.

It is found in the cytoplasm. It carries out the reaction ATP + H2O = ADP + phosphate + H(+). The RuvA-RuvB-RuvC complex processes Holliday junction (HJ) DNA during genetic recombination and DNA repair, while the RuvA-RuvB complex plays an important role in the rescue of blocked DNA replication forks via replication fork reversal (RFR). RuvA specifically binds to HJ cruciform DNA, conferring on it an open structure. The RuvB hexamer acts as an ATP-dependent pump, pulling dsDNA into and through the RuvAB complex. RuvB forms 2 homohexamers on either side of HJ DNA bound by 1 or 2 RuvA tetramers; 4 subunits per hexamer contact DNA at a time. Coordinated motions by a converter formed by DNA-disengaged RuvB subunits stimulates ATP hydrolysis and nucleotide exchange. Immobilization of the converter enables RuvB to convert the ATP-contained energy into a lever motion, pulling 2 nucleotides of DNA out of the RuvA tetramer per ATP hydrolyzed, thus driving DNA branch migration. The RuvB motors rotate together with the DNA substrate, which together with the progressing nucleotide cycle form the mechanistic basis for DNA recombination by continuous HJ branch migration. Branch migration allows RuvC to scan DNA until it finds its consensus sequence, where it cleaves and resolves cruciform DNA. The sequence is that of Holliday junction branch migration complex subunit RuvB from Magnetococcus marinus (strain ATCC BAA-1437 / JCM 17883 / MC-1).